The following is a 219-amino-acid chain: Thiamine-phosphate synthase (219 aa).

4-amino-2-methyl-5-(diphosphooxymethyl)pyrimidine contacts are provided by residues 44–48 (QFREK) and Asn-79. Asp-80 and Asp-99 together coordinate Mg(2+). A 4-amino-2-methyl-5-(diphosphooxymethyl)pyrimidine-binding site is contributed by Ser-117. Residue 143–145 (TST) coordinates 2-[(2R,5Z)-2-carboxy-4-methylthiazol-5(2H)-ylidene]ethyl phosphate. 4-amino-2-methyl-5-(diphosphooxymethyl)pyrimidine is bound at residue Lys-146. Residues Gly-175 and 195-196 (IS) each bind 2-[(2R,5Z)-2-carboxy-4-methylthiazol-5(2H)-ylidene]ethyl phosphate.

Belongs to the thiamine-phosphate synthase family. The cofactor is Mg(2+).

The enzyme catalyses 2-[(2R,5Z)-2-carboxy-4-methylthiazol-5(2H)-ylidene]ethyl phosphate + 4-amino-2-methyl-5-(diphosphooxymethyl)pyrimidine + 2 H(+) = thiamine phosphate + CO2 + diphosphate. It carries out the reaction 2-(2-carboxy-4-methylthiazol-5-yl)ethyl phosphate + 4-amino-2-methyl-5-(diphosphooxymethyl)pyrimidine + 2 H(+) = thiamine phosphate + CO2 + diphosphate. It catalyses the reaction 4-methyl-5-(2-phosphooxyethyl)-thiazole + 4-amino-2-methyl-5-(diphosphooxymethyl)pyrimidine + H(+) = thiamine phosphate + diphosphate. It functions in the pathway cofactor biosynthesis; thiamine diphosphate biosynthesis; thiamine phosphate from 4-amino-2-methyl-5-diphosphomethylpyrimidine and 4-methyl-5-(2-phosphoethyl)-thiazole: step 1/1. In terms of biological role, condenses 4-methyl-5-(beta-hydroxyethyl)thiazole monophosphate (THZ-P) and 2-methyl-4-amino-5-hydroxymethyl pyrimidine pyrophosphate (HMP-PP) to form thiamine monophosphate (TMP). This Bacillus thuringiensis subsp. konkukian (strain 97-27) protein is Thiamine-phosphate synthase.